The sequence spans 160 residues: Calsequestrin-2 (160 aa).

This sequence belongs to the calsequestrin family. Monomer, homodimer and homooligomer. Mostly monomeric in the absence of calcium. Forms higher oligomers in a calcium-dependent manner. Dimers associate to form tetramers, that then form linear homomer chains. Interacts with ASPH and TRDN. Post-translationally, phosphorylation in the C-terminus, probably by CK2, moderately increases calcium buffering capacity. N-glycosylated.

It localises to the sarcoplasmic reticulum lumen. Calsequestrin is a high-capacity, moderate affinity, calcium-binding protein and thus acts as an internal calcium store in muscle. Calcium ions are bound by clusters of acidic residues at the protein surface, especially at the interface between subunits. Can bind around 60 Ca(2+) ions. Regulates the release of lumenal Ca(2+) via the calcium release channel RYR2; this plays an important role in triggering muscle contraction. Plays a role in excitation-contraction coupling in the heart and in regulating the rate of heart beats. This chain is Calsequestrin-2 (CASQ2), found in Sus scrofa (Pig).